The primary structure comprises 1433 residues: Regulatory protein CAT8 (1433 aa).

Residues 20–38 show a composition bias toward polar residues; sequence GSQALSGPSISNRTSSSEA. Positions 20-40 are disordered; sequence GSQALSGPSISNRTSSSEANP. Positions 70–97 form a DNA-binding region, zn(2)-C6 fungal-type; it reads CDRCRSKKTRCDGKRPQCSQCAAVGFEC. Over residues 936 to 946 the composition is skewed to polar residues; that stretch reads KPLFGSQSKNS. Disordered regions lie at residues 936-1024, 1137-1162, 1200-1236, and 1324-1433; these read KPLF…DTKK, QNPE…NNLS, SASA…ILGS, and LNPT…QNAK. 2 stretches are compositionally biased toward basic and acidic residues: residues 947–965 and 994–1005; these read LENR…EHEY and LKYEKDAKRNAK. Polar residues-rich tracts occupy residues 1138–1162, 1221–1235, and 1326–1348; these read NPEN…NNLS, PPST…SILG, and PTDS…SNQR. The span at 1349-1362 shows a compositional bias: low complexity; sequence SLSSGNDSKGDSSS. Polar residues-rich tracts occupy residues 1363–1391 and 1418–1433; these read QENS…SGPS and SNTD…QNAK.

Could be the target of the SNF1/CAT1 - SNF4/CAT3 kinase complex.

It localises to the nucleus. Activator of the gluconeogenic enzymes FBP1 and PCK1 genes. In Saccharomyces cerevisiae (strain ATCC 204508 / S288c) (Baker's yeast), this protein is Regulatory protein CAT8 (CAT8).